A 1159-amino-acid chain; its full sequence is WASH complex subunit 5 (1159 aa).

Belongs to the strumpellin family. Component of the WASH complex.

It is found in the early endosome. Functionally, acts at least in part as component of the WASH complex which seems to regulate washc1 nucleation-promoting factor (NPF) activity and is required for its membrane targeting during endosomal sorting. The protein is WASH complex subunit 5 of Danio rerio (Zebrafish).